The following is a 118-amino-acid chain: UPF0102 protein Arth_2474 (118 aa).

It belongs to the UPF0102 family.

The sequence is that of UPF0102 protein Arth_2474 from Arthrobacter sp. (strain FB24).